The sequence spans 349 residues: Putative nuclease HARBI1 (349 aa).

The region spanning Val-148–Asn-300 is the DDE Tnp4 domain. A divalent metal cation contacts are provided by Asp-149, Asp-199, Asp-225, and Glu-261.

This sequence belongs to the HARBI1 family. Interacts with NAIF1. It depends on a divalent metal cation as a cofactor.

It localises to the nucleus. The protein resides in the cytoplasm. Transposase-derived protein that may have nuclease activity (Potential). Does not have transposase activity. The polypeptide is Putative nuclease HARBI1 (Harbi1) (Rattus norvegicus (Rat)).